Consider the following 885-residue polypeptide: Leucine--tRNA ligase (885 aa).

The short motif at 53–63 (PYPSGKLHMGH) is the 'HIGH' region element. The 'KMSKS' region signature appears at 631–635 (KMSKS). Lys-634 serves as a coordination point for ATP.

This sequence belongs to the class-I aminoacyl-tRNA synthetase family.

The protein resides in the cytoplasm. It catalyses the reaction tRNA(Leu) + L-leucine + ATP = L-leucyl-tRNA(Leu) + AMP + diphosphate. This chain is Leucine--tRNA ligase, found in Psychrobacter sp. (strain PRwf-1).